A 396-amino-acid chain; its full sequence is Peptide chain release factor 1, mitochondrial (396 aa).

Gln-268 bears the N5-methylglutamine mark. The segment at 317–340 is disordered; it reads LEKEEKERNARKDQVSTTDRSDKI.

It belongs to the prokaryotic/mitochondrial release factor family. Methylation of glutamine in the GGQ triplet is conserved from bacteria to mammals.

It is found in the mitochondrion. Its function is as follows. Mitochondrial peptide chain release factor that directs the termination of translation in response to the peptide chain termination codons UAA and UAG. This Kluyveromyces lactis (strain ATCC 8585 / CBS 2359 / DSM 70799 / NBRC 1267 / NRRL Y-1140 / WM37) (Yeast) protein is Peptide chain release factor 1, mitochondrial (MRF1).